The chain runs to 974 residues: Collagen alpha-1(I) chain (974 aa).

Low complexity predominate over residues 1–14 (GISVPGPMGPSGPR). Residues 1–974 (GISVPGPMGP…PGPPGPPGPP (974 aa)) form a disordered region. Residues Pro17, Pro20, Pro23, Pro32, Pro35, Pro38, Pro53, Pro68, Pro75, and Pro81 each carry the 4-hydroxyproline modification. The segment covering 25 to 44 (PQGFQGPPGEPGEPGASGPM) has biased composition (low complexity). The segment covering 56–73 (NGDDGEAGKPGRPGERRG) has biased composition (basic and acidic residues). Residue Lys84 is modified to 5-hydroxylysine; alternate. Lys84 is a glycosylation site (O-linked (Gal...) hydroxylysine; alternate). The residue at position 90 (Ser90) is a Phosphoserine. Residues 98 to 114 (DAGPAGPKGEPGSPGEN) show a composition bias toward low complexity. Pro108, Pro111, Pro117, Pro126, Pro132, Pro153, Pro162, Pro165, Pro192, Pro195, Pro207, Pro213, Pro222, Pro228, Pro231, and Pro245 each carry 4-hydroxyproline. Residues 132 to 150 (PGASGPAGARGNDGATGAA) show a composition bias toward low complexity. Positions 152 to 164 (PPGPTGPAGPPGF) are enriched in pro residues. Residues 198-228 (AGAAGPAGNPGADGQPGAKGANGAPGIAGAP) show a composition bias toward low complexity. Lys248 bears the 5-hydroxylysine mark. 8 positions are modified to 4-hydroxyproline: Pro254, Pro257, Pro269, Pro278, Pro293, Pro299, Pro308, and Pro314. A compositionally biased stretch (gly residues) spans 303 to 312 (GERGGPGSRG). Lys323 carries the 5-hydroxylysine modification. 4-hydroxyproline is present on residues Pro328, Pro337, Pro343, Pro349, Pro358, Pro361, Pro370, Pro379, Pro385, Pro397, Pro406, Pro415, Pro418, Pro436, Pro454, Pro460, Pro466, Pro472, Pro484, Pro493, Pro505, Pro520, Pro527, and Pro536. Residues 352–378 (KGLTGSPGSPGPDGKTGPPGPAGQDGR) are compositionally biased toward low complexity. Residues 387 to 406 (ARGQAGVMGFPGPKGAAGEP) show a composition bias toward low complexity. Residues 504–517 (APGNDGAKGDAGAP) are compositionally biased toward low complexity. Residue Lys548 is modified to 5-hydroxylysine. 4-hydroxyproline occurs at positions 554, 569, and 575. A compositionally biased stretch (low complexity) spans 581 to 595 (SGPSGPAGPTGARGA). Ser584 carries the phosphoserine modification. A 4-hydroxyproline mark is found at Pro596, Pro602, Pro605, Pro614, Pro620, Pro638, Pro647, and Pro656. Positions 608-635 (AGFAGPPGADGQPGAKGEPGDAGAKGDA) are enriched in low complexity. The segment covering 637-649 (PPGPAGPTGPPGP) has biased composition (pro residues). A 5-hydroxylysine modification is found at Lys659. A compositionally biased stretch (low complexity) spans 664–680 (SAGPPGATGFPGAAGRV). Residues Pro668 and Pro674 each carry the 4-hydroxyproline modification. At Pro682 the chain carries 3-hydroxyproline. Residues Pro683, Pro692, Pro695, Pro716, Pro725, Pro733, Pro742, Pro760, Pro769, Pro772, Pro778, Pro793, Pro799, Pro805, Pro814, and Pro820 each carry the 4-hydroxyproline modification. Positions 709 to 718 (ETGPAGRPGE) are enriched in low complexity. A compositionally biased stretch (low complexity) spans 730 to 742 (KGSPGADGPAGAP). Residues 792-802 (PPGPVGPPGLA) show a composition bias toward pro residues. The segment covering 804-826 (PPGESGREGSPGAEGSPGRDGSP) has biased composition (low complexity). Pro residues predominate over residues 828-844 (PKGPPGAPGAPGAPGPV). Lys829 carries the post-translational modification 5-hydroxylysine. Pro832, Pro835, and Pro838 each carry 4-hydroxyproline. The span at 865–879 (AGPAGARGPAGPQGP) shows a compositional bias: low complexity. The segment covering 880-894 (RGDKGETGEQGDRRG) has biased composition (basic and acidic residues). 5-hydroxylysine is present on Lys883. 4-hydroxyproline occurs at positions 905, 908, 926, and 941. Positions 908 to 941 (PGEQGPSGASGPAGPRGPPGSAGSPGKDGLNGLP) are enriched in low complexity. 3-hydroxyproline is present on Pro946. A 4-hydroxyproline modification is found at Pro947. Residues 959–974 (VGPPGPPGPPGPPGPP) show a composition bias toward pro residues. Pro961 bears the 3-hydroxyproline mark. Position 962 is a 4-hydroxyproline (Pro962). Position 964 is a 3-hydroxyproline (Pro964). Pro965 carries the post-translational modification 4-hydroxyproline. 3-hydroxyproline is present on Pro967. 4-hydroxyproline is present on residues Pro968, Pro971, and Pro974.

Belongs to the fibrillar collagen family. In terms of assembly, trimers of one alpha 2(I) and two alpha 1(I) chains. In terms of processing, contains mostly 4-hydroxyproline. Proline residues at the third position of the tripeptide repeating unit (G-X-Y) are hydroxylated in some or all of the chains. Post-translationally, contains 3-hydroxyproline at a few sites. This modification occurs on the first proline residue in the sequence motif Gly-Pro-Hyp, where Hyp is 4-hydroxyproline. Lysine residues at the third position of the tripeptide repeating unit (G-X-Y) are 5-hydroxylated in some or all of the chains. In terms of processing, O-glycosylated on hydroxylated lysine residues. The O-linked glycan consists of a Glc-Gal disaccharide. As to expression, expressed in bones.

The protein resides in the secreted. It is found in the extracellular space. The protein localises to the extracellular matrix. Type I collagen is a member of group I collagen (fibrillar forming collagen). The polypeptide is Collagen alpha-1(I) chain (Scelidodon sp. (strain SLP-2019) (South American ground sloth)).